Consider the following 54-residue polypeptide: Sec-independent protein translocase protein TatA (54 aa).

Residues M1 to A21 traverse the membrane as a helical segment.

This sequence belongs to the TatA/E family. As to quaternary structure, the Tat system comprises two distinct complexes: a TatABC complex, containing multiple copies of TatA, TatB and TatC subunits, and a separate TatA complex, containing only TatA subunits. Substrates initially bind to the TatABC complex, which probably triggers association of the separate TatA complex to form the active translocon.

It is found in the cell inner membrane. Part of the twin-arginine translocation (Tat) system that transports large folded proteins containing a characteristic twin-arginine motif in their signal peptide across membranes. TatA could form the protein-conducting channel of the Tat system. The protein is Sec-independent protein translocase protein TatA of Rickettsia prowazekii (strain Madrid E).